The chain runs to 416 residues: Adenylosuccinate synthetase (416 aa).

GTP contacts are provided by residues 11–17 and 39–41; these read GDEGKGK and GHT. The active-site Proton acceptor is Asp-12. Residues Asp-12 and Gly-39 each coordinate Mg(2+). Residues 12 to 15, 37 to 40, Thr-125, Arg-139, Gln-214, Thr-229, and Arg-290 each bind IMP; these read DEGK and NAGH. Residue His-40 is the Proton donor of the active site. 286-292 is a binding site for substrate; it reads TTTGRPR. GTP-binding positions include Arg-292, 318–320, and 405–407; these read KLD and SLG.

The protein belongs to the adenylosuccinate synthetase family. As to quaternary structure, homodimer. It depends on Mg(2+) as a cofactor.

The protein localises to the cytoplasm. The catalysed reaction is IMP + L-aspartate + GTP = N(6)-(1,2-dicarboxyethyl)-AMP + GDP + phosphate + 2 H(+). Its pathway is purine metabolism; AMP biosynthesis via de novo pathway; AMP from IMP: step 1/2. Plays an important role in the de novo pathway of purine nucleotide biosynthesis. Catalyzes the first committed step in the biosynthesis of AMP from IMP. In Picrophilus torridus (strain ATCC 700027 / DSM 9790 / JCM 10055 / NBRC 100828 / KAW 2/3), this protein is Adenylosuccinate synthetase.